Consider the following 570-residue polypeptide: Glutamate--tRNA ligase (570 aa).

The 'HIGH' region motif lies at 107 to 117; that stretch reads PNPDFVLHLGS.

This sequence belongs to the class-I aminoacyl-tRNA synthetase family. Glutamate--tRNA ligase type 2 subfamily.

It is found in the cytoplasm. It carries out the reaction tRNA(Glu) + L-glutamate + ATP = L-glutamyl-tRNA(Glu) + AMP + diphosphate. In terms of biological role, catalyzes the attachment of glutamate to tRNA(Glu) in a two-step reaction: glutamate is first activated by ATP to form Glu-AMP and then transferred to the acceptor end of tRNA(Glu). This Pyrobaculum calidifontis (strain DSM 21063 / JCM 11548 / VA1) protein is Glutamate--tRNA ligase.